Reading from the N-terminus, the 915-residue chain is Kinesin-like protein KIN-10A (915 aa).

Over residues 1-16 (MAPPTPSPRPGPPPTP) the composition is skewed to pro residues. 2 disordered regions span residues 1 to 28 (MAPPTPSPRPGPPPTPQAAMTTPLKTPA) and 34 to 53 (HFPAMTPRNGGGGGAAAGGT). Residues 56-391 (PVEVIGRIRN…LEYGAKAKCI (336 aa)) form the Kinesin motor domain. Residue 137 to 144 (GPTGSGKS) coordinates ATP. A coiled-coil region spans residues 426-517 (NLQKENKLRE…QRLKEVEREK (92 aa)). A disordered region spans residues 676-718 (PAKKAFGDENNEPAKQTFGDENKQQPAKRVFGDENKDPSAWGA).

It belongs to the TRAFAC class myosin-kinesin ATPase superfamily. Kinesin family. KIN-10 subfamily.

The sequence is that of Kinesin-like protein KIN-10A from Oryza sativa subsp. japonica (Rice).